The sequence spans 358 residues: Trans-enoyl reductase milB (358 aa).

NADP(+) contacts are provided by residues 48–51 (VDTK), 170–173 (ATAT), 193–196 (SAKH), Tyr-211, 258–259 (LD), and 349–350 (VR).

It belongs to the zinc-containing alcohol dehydrogenase family. Monomer.

It carries out the reaction 10 malonyl-CoA + acetyl-CoA + 3 AH2 + 8 NADPH + 18 H(+) = cordypyrone A + 3 A + 10 CO2 + 8 NADP(+) + 11 CoA + 8 H2O. The protein operates within secondary metabolite biosynthesis. In terms of biological role, trans-enoyl reductase; part of the gene cluster that mediates the biosynthesis of cordypyrones A and B, 2 pyrones that show modest activities against pathogenic bacteria including methicillin-resistant Staphylococcus aureus (MRSA), Mycobacterium tuberculosis and Bacillus cereus. The HR-PKS milA catalyzes the formation of cordypyrones A via condensation of one acetate with 10 malonate units. Since milA lacks an enoyl reductase domain, the 2 beta-keto processing domains DH and KR of milA collaborate with the trans-enoyl reductase milB to catalyze the different levels of reduction. The cytochrome P450 monooxygenase milC then hydroxylates the C-22 of cordypyrones A to yield cordypyrones B. The sequence is that of Trans-enoyl reductase milB from Cordyceps militaris (strain CM01) (Caterpillar fungus).